Reading from the N-terminus, the 362-residue chain is Cobalt-precorrin-5B C(1)-methyltransferase (362 aa).

The protein belongs to the CbiD family.

It carries out the reaction Co-precorrin-5B + S-adenosyl-L-methionine = Co-precorrin-6A + S-adenosyl-L-homocysteine. The protein operates within cofactor biosynthesis; adenosylcobalamin biosynthesis; cob(II)yrinate a,c-diamide from sirohydrochlorin (anaerobic route): step 6/10. Functionally, catalyzes the methylation of C-1 in cobalt-precorrin-5B to form cobalt-precorrin-6A. In Burkholderia thailandensis (strain ATCC 700388 / DSM 13276 / CCUG 48851 / CIP 106301 / E264), this protein is Cobalt-precorrin-5B C(1)-methyltransferase.